A 353-amino-acid polypeptide reads, in one-letter code: MTIALGKFTKDENDLFDIMDDWLRRDRFVFVGWSGLLLFPCAYFALGGWFTGTTFVTSWYTHGLASSYLEGCNFLTAAVSTPANSLAHSLLLLWGPEAQGDFTRWCQLGGLWTFVALHGAFALIGFMLRQFELARSVQLRPYNAIAFSAPIAVFVSVFLIYPLGQSGWFFAPSFGVAAIFRFILFFQGFHNWTLNPFHMMGVAGVLGAALLCAIHGATVENTLFEDGDGANTFRAFNPTQAEETYSMVTANRFWSQIFGVAFSNKRWLHFFMLFVPVTGLWMSALGVVGLALNLRAYDFVSQEIRAAEDPEFETFYTKNILLNEGIRAWMAAQDQPHENLIFPEEVLPRGNAL.

Residue T2 is modified to N-acetylthreonine. T2 carries the post-translational modification Phosphothreonine. Residues 41 to 61 (CAYFALGGWFTGTTFVTSWYT) form a helical membrane-spanning segment. Chlorophyll a is bound at residue H118. The helical transmembrane segment at 125–141 (GFMLRQFELARSVQLRP) threads the bilayer. Q130 and N143 together coordinate pheophytin a. Residues 153–166 (VFVSVFLIYPLGQS) traverse the membrane as a helical segment. H198 is a binding site for chlorophyll a. Residues 208–228 (AALLCAIHGATVENTLFEDGD) traverse the membrane as a helical segment. Residues H215 and F262 each contribute to the a plastoquinone site. A Fe cation-binding site is contributed by H215. H269 contributes to the Fe cation binding site. A helical membrane pass occupies residues 279 to 295 (GLWMSALGVVGLALNLR).

It belongs to the reaction center PufL/M/PsbA/D family. PSII is composed of 1 copy each of membrane proteins PsbA, PsbB, PsbC, PsbD, PsbE, PsbF, PsbH, PsbI, PsbJ, PsbK, PsbL, PsbM, PsbT, PsbX, PsbY, PsbZ, Psb30/Ycf12, at least 3 peripheral proteins of the oxygen-evolving complex and a large number of cofactors. It forms dimeric complexes. Requires The D1/D2 heterodimer binds P680, chlorophylls that are the primary electron donor of PSII, and subsequent electron acceptors. It shares a non-heme iron and each subunit binds pheophytin, quinone, additional chlorophylls, carotenoids and lipids. There is also a Cl(-1) ion associated with D1 and D2, which is required for oxygen evolution. The PSII complex binds additional chlorophylls, carotenoids and specific lipids. as cofactor.

Its subcellular location is the plastid. It is found in the chloroplast thylakoid membrane. The catalysed reaction is 2 a plastoquinone + 4 hnu + 2 H2O = 2 a plastoquinol + O2. In terms of biological role, photosystem II (PSII) is a light-driven water:plastoquinone oxidoreductase that uses light energy to abstract electrons from H(2)O, generating O(2) and a proton gradient subsequently used for ATP formation. It consists of a core antenna complex that captures photons, and an electron transfer chain that converts photonic excitation into a charge separation. The D1/D2 (PsbA/PsbD) reaction center heterodimer binds P680, the primary electron donor of PSII as well as several subsequent electron acceptors. D2 is needed for assembly of a stable PSII complex. The protein is Photosystem II D2 protein of Morus indica (Mulberry).